The chain runs to 289 residues: Bifunctional protein FolD (289 aa).

Residues 165-167 (GAS) and Ser-190 contribute to the NADP(+) site.

This sequence belongs to the tetrahydrofolate dehydrogenase/cyclohydrolase family. As to quaternary structure, homodimer.

It carries out the reaction (6R)-5,10-methylene-5,6,7,8-tetrahydrofolate + NADP(+) = (6R)-5,10-methenyltetrahydrofolate + NADPH. The catalysed reaction is (6R)-5,10-methenyltetrahydrofolate + H2O = (6R)-10-formyltetrahydrofolate + H(+). It participates in one-carbon metabolism; tetrahydrofolate interconversion. Its function is as follows. Catalyzes the oxidation of 5,10-methylenetetrahydrofolate to 5,10-methenyltetrahydrofolate and then the hydrolysis of 5,10-methenyltetrahydrofolate to 10-formyltetrahydrofolate. The chain is Bifunctional protein FolD from Ralstonia pickettii (strain 12J).